A 358-amino-acid polypeptide reads, in one-letter code: 2-oxoisovalerate dehydrogenase subunit beta 2, mitochondrial (358 aa).

The transit peptide at 1-16 (MAAALVRRFCRGSSFP) directs the protein to the mitochondrion. Residue tyrosine 119 participates in thiamine diphosphate binding. Residues glycine 145, leucine 147, threonine 148, aspartate 198, and asparagine 200 each contribute to the K(+) site.

As to quaternary structure, heterotetramer of alpha and beta chains. Thiamine diphosphate serves as cofactor. In terms of tissue distribution, expressed in the non-photosynthetic organs such as siliques, flowers and roots.

The protein localises to the mitochondrion matrix. The catalysed reaction is N(6)-[(R)-lipoyl]-L-lysyl-[protein] + 3-methyl-2-oxobutanoate + H(+) = N(6)-[(R)-S(8)-2-methylpropanoyldihydrolipoyl]-L-lysyl-[protein] + CO2. The branched-chain alpha-keto dehydrogenase complex catalyzes the overall conversion of alpha-keto acids to acyl-CoA and CO(2). It contains multiple copies of three enzymatic components: branched-chain alpha-keto acid decarboxylase (E1), lipoamide acyltransferase (E2) and lipoamide dehydrogenase (E3). Required during sugar starvation and acts under the control of a sugar-sensing mechanism involving Ser/Thr kinases and phosphatases. The sequence is that of 2-oxoisovalerate dehydrogenase subunit beta 2, mitochondrial (DIN4) from Arabidopsis thaliana (Mouse-ear cress).